The following is a 62-amino-acid chain: MSIVFQFFLIALVLFSLLMVIGVPVAYASPQNWDQSKPLLYVGSAIWAILVVAVAILNFLVI.

2 consecutive transmembrane segments (helical) span residues 8–28 (FLIA…VAYA) and 41–61 (YVGS…NFLV).

Belongs to the PsbZ family. As to quaternary structure, PSII is composed of 1 copy each of membrane proteins PsbA, PsbB, PsbC, PsbD, PsbE, PsbF, PsbH, PsbI, PsbJ, PsbK, PsbL, PsbM, PsbT, PsbX, PsbY, PsbZ, Psb30/Ycf12, peripheral proteins PsbO, CyanoQ (PsbQ), PsbU, PsbV and a large number of cofactors. It forms dimeric complexes.

The protein resides in the cellular thylakoid membrane. In terms of biological role, may control the interaction of photosystem II (PSII) cores with the light-harvesting antenna, regulates electron flow through the 2 photosystem reaction centers. PSII is a light-driven water plastoquinone oxidoreductase, using light energy to abstract electrons from H(2)O, generating a proton gradient subsequently used for ATP formation. This is Photosystem II reaction center protein Z from Microcystis aeruginosa (strain NIES-843 / IAM M-2473).